A 368-amino-acid polypeptide reads, in one-letter code: Single-stranded DNA-binding protein 3 (368 aa).

The region spanning 16-48 (AREKLALYVYEYLLHVGAQKSAQTFLSEIRWEK) is the LisH domain. Residues 100–368 (PVLGNIPPND…NYSPSMTMSV (269 aa)) are disordered. The segment covering 126–139 (GSQPSPHAQPPPHN) has biased composition (pro residues). 3 stretches are compositionally biased toward low complexity: residues 174–189 (PNMG…PRGM), 211–220 (GPGMPGINMG), and 230–248 (PSSA…TYVG). Residues 252–262 (GGGPPGTPIMP) are compositionally biased toward pro residues. Residues 265–276 (ADSTNSSDNIYT) are compositionally biased toward polar residues. Gly residues predominate over residues 295-305 (GSDGPMGGMGG). The segment covering 326–337 (NSPNNISGISNP) has biased composition (low complexity). Polar residues predominate over residues 353–368 (HSFQNDNYSPSMTMSV).

In terms of tissue distribution, expressed in embryonic fibroblasts and chondrocytes.

It is found in the nucleus. Its function is as follows. May be involved in transcription regulation of the alpha 2(I) collagen gene where it binds to the single-stranded polypyrimidine sequences in the promoter region. In Gallus gallus (Chicken), this protein is Single-stranded DNA-binding protein 3 (SSBP3).